Reading from the N-terminus, the 472-residue chain is tRNA modification GTPase MnmE (472 aa).

The (6S)-5-formyl-5,6,7,8-tetrahydrofolate site is built by Arg28, Glu91, and Lys130. In terms of domain architecture, TrmE-type G spans Gly225–Ala391. Residue Asn235 coordinates K(+). GTP contacts are provided by residues Asn235–Ser240, Ser254–Thr260, and Asp279–Gly282. Ser239 serves as a coordination point for Mg(2+). K(+)-binding residues include Ser254, Ile256, and Thr259. A Mg(2+)-binding site is contributed by Thr260. Lys472 is a binding site for (6S)-5-formyl-5,6,7,8-tetrahydrofolate.

This sequence belongs to the TRAFAC class TrmE-Era-EngA-EngB-Septin-like GTPase superfamily. TrmE GTPase family. As to quaternary structure, homodimer. Heterotetramer of two MnmE and two MnmG subunits. K(+) serves as cofactor.

The protein localises to the cytoplasm. Its function is as follows. Exhibits a very high intrinsic GTPase hydrolysis rate. Involved in the addition of a carboxymethylaminomethyl (cmnm) group at the wobble position (U34) of certain tRNAs, forming tRNA-cmnm(5)s(2)U34. The polypeptide is tRNA modification GTPase MnmE (Treponema denticola (strain ATCC 35405 / DSM 14222 / CIP 103919 / JCM 8153 / KCTC 15104)).